A 470-amino-acid polypeptide reads, in one-letter code: MSKIQGTLAQWRDRLRRKELSPAELVNLTADAIEADRTTNAYISFDREAALHAAAGADISSPLAGIPIAVKDNINVLGQPTRCASRLLSPYVAPYDATSIRLLKEAGGIPLGRTNMDEFAMGASGENSAYGITRNPEAPDRIPGGSSSGSAAAVASATAIAALGSDTGGSIRQPAGHCGIVGLKPTYGRVSRYGLVAFASSLDQIGPMTRTVEDAAILLQAISGHDRKDSTSANCPVPDFEAALGRDVKGLKVGIPSEYFTSGNHPGISEAVQNTVKQLESLGAELVEVNLPHADAVVAAYYIIACAEASSNLSRFDGVRYGKRAEDAAGLVELFSRTREEGFGPEVKRRIILGTYVLSSGYYDAYYSRAQKVRSLVARDFAEAFSRVDIIVGPTSPAPAPKIGDSALDHLQTYLADIYTIPANLAGLPAMSIPCGTVRESGMELPVGFQMMAPHFREDLLLKTGFALGK.

Active-site charge relay system residues include Lys71 and Ser146. Ser170 acts as the Acyl-ester intermediate in catalysis.

The protein belongs to the amidase family. GatA subfamily. In terms of assembly, heterotrimer of A, B and C subunits.

It catalyses the reaction L-glutamyl-tRNA(Gln) + L-glutamine + ATP + H2O = L-glutaminyl-tRNA(Gln) + L-glutamate + ADP + phosphate + H(+). Its function is as follows. Allows the formation of correctly charged Gln-tRNA(Gln) through the transamidation of misacylated Glu-tRNA(Gln) in organisms which lack glutaminyl-tRNA synthetase. The reaction takes place in the presence of glutamine and ATP through an activated gamma-phospho-Glu-tRNA(Gln). The polypeptide is Glutamyl-tRNA(Gln) amidotransferase subunit A (Akkermansia muciniphila (strain ATCC BAA-835 / DSM 22959 / JCM 33894 / BCRC 81048 / CCUG 64013 / CIP 107961 / Muc)).